The following is a 382-amino-acid chain: MTEQRPLTIALVAGETSGDILGAGLIRALKERVPNARFVGVAGPRMQAEGCEAWYEMEELAVMGIVEVLGRLRRLLHIRADLTKRFGELKPDVFVGIDAPDFNITLEGNLKKQGIKTIHYVSPSVWAWRQKRVFKIGRATDLVLAFLPFEKAFYDKYNVPCRFIGHTMADAMPLDPDKNGARDVLGIPYDAHCLALLPGSRGAEVEMLSADFLKTAQLLRQTYPDLEIVVPLVNAKRREQFERIKAAVAPDLSVHLLDGMGREAMVASDAALLASGTAALECMLAKCPMVVGYRMKPFTFWLAKRLVKTDYVSLPNLLAGRELVKELLQEECEPQKLAAALLPLLANGKTSHAMHDTFRELHQQIRCNADEQAAQAVLELAQ.

It belongs to the LpxB family.

It carries out the reaction 2-N,3-O-bis[(3R)-3-hydroxytetradecanoyl]-alpha-D-glucosaminyl 1-phosphate + UDP-2-N,3-O-bis[(3R)-3-hydroxytetradecanoyl]-alpha-D-glucosamine = lipid A disaccharide (E. coli) + UDP + H(+). The catalysed reaction is a lipid X + a UDP-2-N,3-O-bis[(3R)-3-hydroxyacyl]-alpha-D-glucosamine = a lipid A disaccharide + UDP + H(+). The protein operates within glycolipid biosynthesis; lipid IV(A) biosynthesis; lipid IV(A) from (3R)-3-hydroxytetradecanoyl-[acyl-carrier-protein] and UDP-N-acetyl-alpha-D-glucosamine: step 5/6. Its function is as follows. Condensation of UDP-2,3-diacylglucosamine and 2,3-diacylglucosamine-1-phosphate to form lipid A disaccharide, a precursor of lipid A, a phosphorylated glycolipid that anchors the lipopolysaccharide to the outer membrane of the cell. This Escherichia coli O45:K1 (strain S88 / ExPEC) protein is Lipid-A-disaccharide synthase.